A 194-amino-acid chain; its full sequence is Imidazoleglycerol-phosphate dehydratase (194 aa).

This sequence belongs to the imidazoleglycerol-phosphate dehydratase family.

The protein resides in the cytoplasm. It carries out the reaction D-erythro-1-(imidazol-4-yl)glycerol 3-phosphate = 3-(imidazol-4-yl)-2-oxopropyl phosphate + H2O. It functions in the pathway amino-acid biosynthesis; L-histidine biosynthesis; L-histidine from 5-phospho-alpha-D-ribose 1-diphosphate: step 6/9. This Listeria welshimeri serovar 6b (strain ATCC 35897 / DSM 20650 / CCUG 15529 / CIP 8149 / NCTC 11857 / SLCC 5334 / V8) protein is Imidazoleglycerol-phosphate dehydratase.